The primary structure comprises 222 residues: NADH dehydrogenase [ubiquinone] iron-sulfur protein 8-B, mitochondrial (222 aa).

4Fe-4S ferredoxin-type domains follow at residues 114-143 and 153-182; these read RRYP…IEAE and TRYD…EGPN. [4Fe-4S] cluster-binding residues include C123, C126, C129, C133, C162, C165, C168, and C172.

The protein belongs to the complex I 23 kDa subunit family. In terms of assembly, complex I is composed of at least 49 different subunits. This is a component of the iron-sulfur (IP) fragment of the enzyme. [4Fe-4S] cluster is required as a cofactor.

It is found in the mitochondrion. It catalyses the reaction a ubiquinone + NADH + 5 H(+)(in) = a ubiquinol + NAD(+) + 4 H(+)(out). Its function is as follows. Core subunit of the mitochondrial membrane respiratory chain NADH dehydrogenase (Complex I) that is believed to belong to the minimal assembly required for catalysis. Complex I functions in the transfer of electrons from NADH to the respiratory chain. The immediate electron acceptor for the enzyme is believed to be ubiquinone. May donate electrons to ubiquinone. The polypeptide is NADH dehydrogenase [ubiquinone] iron-sulfur protein 8-B, mitochondrial (Arabidopsis thaliana (Mouse-ear cress)).